The primary structure comprises 124 residues: Glycine cleavage system H protein (124 aa).

A Lipoyl-binding domain is found at 22–104 (LIVTGISDHA…YGKGWIYKMK (83 aa)). At Lys-63 the chain carries N6-lipoyllysine.

It belongs to the GcvH family. In terms of assembly, the glycine cleavage system is composed of four proteins: P, T, L and H. The cofactor is (R)-lipoate.

Its function is as follows. The glycine cleavage system catalyzes the degradation of glycine. The H protein shuttles the methylamine group of glycine from the P protein to the T protein. The protein is Glycine cleavage system H protein of Acinetobacter baylyi (strain ATCC 33305 / BD413 / ADP1).